Here is a 776-residue protein sequence, read N- to C-terminus: Photosystem I P700 chlorophyll a apoprotein A1 (776 aa).

Transmembrane regions (helical) follow at residues Ile-76–Ala-99, Leu-162–His-185, Leu-201–Asn-225, Val-309–Tyr-327, Trp-368–Tyr-391, Leu-407–Ile-433, Ala-455–His-477, and Leu-557–Leu-575. Residues Cys-599 and Cys-608 each coordinate [4Fe-4S] cluster. 2 consecutive transmembrane segments (helical) span residues His-615 to Trp-636 and Leu-690 to Phe-712. Divinylchlorophyll a' is bound at residue His-701. The divinyl chlorophyll a site is built by Met-709 and Tyr-717. Position 718 (Trp-718) interacts with phylloquinone. A helical transmembrane segment spans residues Ala-750 to Ala-770.

It belongs to the PsaA/PsaB family. As to quaternary structure, the PsaA/B heterodimer binds the P700 chlorophyll special pair and subsequent electron acceptors. PSI consists of a core antenna complex that captures photons, and an electron transfer chain that converts photonic excitation into a charge separation. The cyanobacterial PSI reaction center is composed of one copy each of PsaA,B,C,D,E,F,I,J,K,L,M and X, and forms trimeric complexes. It depends on PSI electron transfer chain: 5 divinyl chlorophyll a, 1 divinyl chlorophyll a', 2 phylloquinones and 3 4Fe-4S clusters. PSI core antenna: 90 divinyl chlorophyll a, 22 carotenoids, 3 phospholipids and 1 galactolipid. P700 is a divinyl chlorophyll a/divinyl chlorophyll a' dimer, A0 is one or more chlorophyll divinyl a, A1 is one or both phylloquinones and FX is a shared 4Fe-4S iron-sulfur center. as a cofactor.

It localises to the cellular thylakoid membrane. It catalyses the reaction reduced [plastocyanin] + hnu + oxidized [2Fe-2S]-[ferredoxin] = oxidized [plastocyanin] + reduced [2Fe-2S]-[ferredoxin]. Functionally, psaA and PsaB bind P700, the primary electron donor of photosystem I (PSI), as well as the electron acceptors A0, A1 and FX. PSI is a plastocyanin/cytochrome c6-ferredoxin oxidoreductase, converting photonic excitation into a charge separation, which transfers an electron from the donor P700 chlorophyll pair to the spectroscopically characterized acceptors A0, A1, FX, FA and FB in turn. Oxidized P700 is reduced on the lumenal side of the thylakoid membrane by plastocyanin or cytochrome c6. The sequence is that of Photosystem I P700 chlorophyll a apoprotein A1 from Prochlorococcus marinus (strain MIT 9313).